Reading from the N-terminus, the 730-residue chain is Dual function macrocyclase-peptidase POPB (730 aa).

Active-site charge relay system residues include Ser577, Asp661, and His698.

The protein belongs to the peptidase S9A family. As to quaternary structure, monomer. In terms of tissue distribution, expressed in the pileus (cap) and lamellae where it colocalizes with amanitin.

The enzyme catalyses Hydrolysis of Pro-|-Xaa &gt;&gt; Ala-|-Xaa in oligopeptides.. Functionally, dual function macrocyclase-peptidase involved in the biosynthesis of the highly toxic amanitin toxin family of macrocycles. Cleaves peptide bonds on the C-terminal side of prolyl residues. The enzyme first removes 10 residues from the N-terminus of a 35-residue substrate. Conformational trapping of the 25 amino-acid peptide forces the enzyme to release this intermediate rather than proceed to macrocyclization. The enzyme rebinds the 25 amino-acid peptide in a different conformation and catalyzes macrocyclization of the N-terminal eight residues. The polypeptide is Dual function macrocyclase-peptidase POPB (Amanita bisporigera (Destroying angel)).